The primary structure comprises 111 residues: MRALILLSLGLLRVAVPSPPQVVVYTYKPVVHGEKNTLLCHAKEFNPPNVELQLFEDGNVFSQANQTDLSFESNWKFKLTKFIELIPREDVEYSCHVMYMGKTSIYKLESF.

Positions 1-17 (MRALILLSLGLLRVAVP) are cleaved as a signal peptide. The region spanning 20–111 (PQVVVYTYKP…KTSIYKLESF (92 aa)) is the Ig-like C1-type domain.

This sequence belongs to the beta-2-microglobulin family. Heterodimer of an alpha chain and a beta chain. Beta-2-microglobulin is the beta-chain of major histocompatibility complex class I molecules.

Its subcellular location is the secreted. In terms of biological role, component of the class I major histocompatibility complex (MHC). Involved in the presentation of peptide antigens to the immune system. The sequence is that of Beta-2-microglobulin (b2m) from Rostroraja eglanteria (Clearnose skate).